Consider the following 195-residue polypeptide: Imidazoleglycerol-phosphate dehydratase (195 aa).

The protein belongs to the imidazoleglycerol-phosphate dehydratase family.

It is found in the cytoplasm. The enzyme catalyses D-erythro-1-(imidazol-4-yl)glycerol 3-phosphate = 3-(imidazol-4-yl)-2-oxopropyl phosphate + H2O. It participates in amino-acid biosynthesis; L-histidine biosynthesis; L-histidine from 5-phospho-alpha-D-ribose 1-diphosphate: step 6/9. This Deinococcus deserti (strain DSM 17065 / CIP 109153 / LMG 22923 / VCD115) protein is Imidazoleglycerol-phosphate dehydratase.